A 310-amino-acid polypeptide reads, in one-letter code: Probable GTP 3',8-cyclase (310 aa).

Positions 5–232 (RFGRPVTNLR…RRRKYFIPID (228 aa)) constitute a Radical SAM core domain. Arginine 14 provides a ligand contact to GTP. [4Fe-4S] cluster contacts are provided by cysteine 21 and cysteine 25. Tyrosine 27 lines the S-adenosyl-L-methionine pocket. Cysteine 28 serves as a coordination point for [4Fe-4S] cluster. Lysine 61 is a GTP binding site. Glycine 65 lines the S-adenosyl-L-methionine pocket. GTP is bound at residue threonine 90. Serine 114 contacts S-adenosyl-L-methionine. Lysine 150 serves as a coordination point for GTP. Methionine 189 provides a ligand contact to S-adenosyl-L-methionine. Positions 250 and 253 each coordinate [4Fe-4S] cluster. Residue 255–257 (RLR) coordinates GTP. Cysteine 267 provides a ligand contact to [4Fe-4S] cluster.

This sequence belongs to the radical SAM superfamily. MoaA family. It depends on [4Fe-4S] cluster as a cofactor.

It catalyses the reaction GTP + AH2 + S-adenosyl-L-methionine = (8S)-3',8-cyclo-7,8-dihydroguanosine 5'-triphosphate + 5'-deoxyadenosine + L-methionine + A + H(+). It participates in cofactor biosynthesis; molybdopterin biosynthesis. Functionally, catalyzes the cyclization of GTP to (8S)-3',8-cyclo-7,8-dihydroguanosine 5'-triphosphate. The chain is Probable GTP 3',8-cyclase from Pyrococcus horikoshii (strain ATCC 700860 / DSM 12428 / JCM 9974 / NBRC 100139 / OT-3).